A 325-amino-acid chain; its full sequence is MWKYGQNQGNQGPAGGGGGAPNMMPMGGFMQGGGGMQGGGGMQHGNMPQMHMTPQQQQQQQQMNMMGGPGGMQMNPNAVGPTGLMPGMSPQHQMQQQQQMMQGVPMSMPPQQAMQQQMMGPQQGLGMGGSSGPQQQQQLQQQQQQSNLQQQQQQHNVGSGGAPGAGGVGNNMLAISQPNPHKEINIVQLSRLGQETVQDIASRFQEVFSALKNIQPTSHRDNNTEKKVQEYFRTIRLLFKRVRIIYDKCNDAVMDYMNAESLIPYKDEPEPRIETSQCDEYRKVLQENHEYIETVKLKNRQLREIIDRTRIIIWEINTMLAMRRS.

Low complexity-rich tracts occupy residues 1–11 (MWKYGQNQGNQ), 109–122 (PPQQ…MGPQ), and 132–154 (GPQQ…QQQQ). 2 disordered regions span residues 1-26 (MWKY…MMPM) and 109-176 (PPQQ…LAIS). Positions 158–169 (GSGGAPGAGGVG) are enriched in gly residues.

This sequence belongs to the Mediator complex subunit 30 family. Component of the Mediator complex.

It is found in the nucleus. Its function is as follows. Component of the Mediator complex, a coactivator involved in the regulated transcription of nearly all RNA polymerase II-dependent genes. Mediator functions as a bridge to convey information from gene-specific regulatory proteins to the basal RNA polymerase II transcription machinery. Mediator is recruited to promoters by direct interactions with regulatory proteins and serves as a scaffold for the assembly of a functional preinitiation complex with RNA polymerase II and the general transcription factors. In Drosophila pseudoobscura pseudoobscura (Fruit fly), this protein is Mediator of RNA polymerase II transcription subunit 30 (MED30).